The sequence spans 330 residues: MAYKIPFPPRQPSASSHLPLTLISLEDWALVTLNGPDRVKYLQGQVTADIEALPADSHVLCGHCDAKGKMWSNLRLFHRGEGFAYLERRSVLDSQLAEIKKYAVFSKLTIAADSEAVLLGVAGFQARAALAGVFNSLPDAEHQVVQDGETTLLHFSLPAERFLLVTTAAVAEQLVDKLHEQAELNDSQQWLTLDIEAGYPVIDAANSGQFIPQATNLQALDGISFSKGCYTGQEMVARAKFRGANKRALYWLEGKAGRVPQAAEDVELQLGENWRRTGTVLSAARLADGTLWVQVVLNNDLDADSKLRVRDDATSQLAIKPLPYSLAEEK.

Folate is bound by residues W28 and W190.

This sequence belongs to the tRNA-modifying YgfZ family.

It localises to the cytoplasm. In terms of biological role, folate-binding protein involved in regulating the level of ATP-DnaA and in the modification of some tRNAs. It is probably a key factor in regulatory networks that act via tRNA modification, such as initiation of chromosomal replication. The polypeptide is tRNA-modifying protein YgfZ (Serratia proteamaculans (strain 568)).